The sequence spans 1237 residues: Anion exchange protein 2 (1237 aa).

Residues 1 to 237 (MSSAPRRPAS…SYNLQERRRI (237 aa)) are disordered. Residues 1 to 703 (MSSAPRRPAS…SDFRDALDPQ (703 aa)) are Cytoplasmic-facing. Composition is skewed to basic and acidic residues over residues 37–49 (ELHR…RFEE) and 58–75 (GGEE…EYHR). Composition is skewed to basic residues over residues 76-85 (QSSHHIHHPL) and 94-110 (RRRK…RRRP). Residue Ser113 is modified to Phosphoserine. Over residues 122–133 (EEGEEDEEEANE) the composition is skewed to acidic residues. Residues 137 to 151 (ARAPTEPSPASTPSS) show a composition bias toward low complexity. Phosphoserine is present on residues Ser144, Ser170, and Ser172. Gly residues predominate over residues 206–215 (TAGGDNGGAS). The residue at position 239 (Ser239) is a Phosphoserine. Thr253 bears the Phosphothreonine mark. N6-methyllysine is present on Lys270. The tract at residues 281 to 316 (RRHLVRKNAKGSAQSSREGREPGPTPRSRPRAPHKP) is disordered. The residue at position 439 (Ser439) is a Phosphoserine. The disordered stretch occupies residues 445 to 464 (SLLGHHHGQGAESDPHVTEP). 4 helical membrane passes run 704–727 (CVAA…GLLG), 733–770 (LIGV…LLVF), 790–812 (VWIG…SFLV), and 822–843 (IFAF…IKIF). The interval 704–1237 (CVAAVIFIYF…DEYNEMPMPV (534 aa)) is membrane (anion exchange). The Extracellular segment spans residues 844–896 (QEHPLHGCSVSNSSETDSSENATWAGAGSTLGPANRSSAGQAGQGRPRGQPNT). Residues Asn855, Asn864, and Asn878 are each glycosylated (N-linked (GlcNAc...) asparagine). A helical membrane pass occupies residues 897–914 (ALLSLVLMAGTFFIAFFL). At 915–929 (RKFKNSRFFPGRIRR) the chain is on the cytoplasmic side. Helical transmembrane passes span 930-950 (VIGD…DYSI), 984-1006 (PFPV…LIFM), 1032-1053 (LLLI…LAAA), 1087-1132 (VTGL…IQFY), and 1159-1195 (MHLF…TVPL). Cys1169 carries the S-palmitoyl cysteine lipid modification.

It belongs to the anion exchanger (TC 2.A.31) family. In terms of tissue distribution, expressed in the ileum (at protein level).

It localises to the cell membrane. The protein localises to the apical cell membrane. Its subcellular location is the basolateral cell membrane. It carries out the reaction hydrogencarbonate(in) + chloride(out) = hydrogencarbonate(out) + chloride(in). Functionally, sodium-independent anion exchanger which mediates the electroneutral exchange of chloride for bicarbonate ions across the cell membrane. Plays an important role in osteoclast differentiation and function. Regulates bone resorption and calpain-dependent actin cytoskeleton organization in osteoclasts via anion exchange-dependent control of pH. Essential for intracellular pH regulation in CD8(+) T-cells upon CD3 stimulation, modulating CD8(+) T-cell response. This Oryctolagus cuniculus (Rabbit) protein is Anion exchange protein 2 (SLC4A2).